Reading from the N-terminus, the 1343-residue chain is Spermatogenesis-associated protein 31A6 (1343 aa).

A helical transmembrane segment spans residues Pro-23–Leu-43. Disordered regions lie at residues Pro-55 to Pro-88, Gly-106 to Ile-235, Asp-624 to Lys-654, Pro-895 to Val-951, Val-1080 to Val-1156, and Lys-1309 to His-1331. Residues Gly-60–Arg-82 are compositionally biased toward basic residues. Over residues Leu-165 to Val-178 the composition is skewed to polar residues. The span at Pro-198 to Lys-222 shows a compositional bias: pro residues. 2 stretches are compositionally biased toward polar residues: residues Pro-627–Glu-647 and Leu-923–Ala-944. Basic and acidic residues-rich tracts occupy residues His-1104–Gly-1123 and Arg-1133–Glu-1142.

The protein belongs to the SPATA31 family.

The protein resides in the membrane. In terms of biological role, may play a role in spermatogenesis. In Homo sapiens (Human), this protein is Spermatogenesis-associated protein 31A6 (SPATA31A6).